The following is a 365-amino-acid chain: Alanine racemase (365 aa).

The Proton acceptor; specific for D-alanine role is filled by K32. An N6-(pyridoxal phosphate)lysine modification is found at K32. R128 contacts substrate. Y257 serves as the catalytic Proton acceptor; specific for L-alanine. M305 contributes to the substrate binding site.

It belongs to the alanine racemase family. Pyridoxal 5'-phosphate is required as a cofactor.

The catalysed reaction is L-alanine = D-alanine. Its pathway is amino-acid biosynthesis; D-alanine biosynthesis; D-alanine from L-alanine: step 1/1. In terms of biological role, catalyzes the interconversion of L-alanine and D-alanine. May also act on other amino acids. This is Alanine racemase (alr) from Francisella tularensis subsp. holarctica (strain OSU18).